The chain runs to 123 residues: Large ribosomal subunit protein uL14 (123 aa).

It belongs to the universal ribosomal protein uL14 family. Part of the 50S ribosomal subunit. Forms a cluster with proteins L3 and L19. In the 70S ribosome, L14 and L19 interact and together make contacts with the 16S rRNA in bridges B5 and B8.

Functionally, binds to 23S rRNA. Forms part of two intersubunit bridges in the 70S ribosome. The chain is Large ribosomal subunit protein uL14 from Proteus mirabilis (strain HI4320).